Here is a 269-residue protein sequence, read N- to C-terminus: Iron(3+)-hydroxamate import ATP-binding protein FhuC (269 aa).

The ABC transporter domain occupies 4-240 (LSTEQLGIGY…DILKQVFQID (237 aa)). Residues 36–43 (GPNGCGKS) and 160–171 (LLLLDEPTTYLD) contribute to the ATP site.

The protein belongs to the ABC transporter superfamily. Iron (Fe3+)-hydroxamate importer (TC 3.A.1.14.7) family. In terms of assembly, the complex is composed of an ATP-binding protein (FhuC), two transmembrane proteins (FhuB and FhuG) and a solute-binding protein (FhuD or YxeB).

The protein resides in the cell membrane. The enzyme catalyses ATP + H2O + Fe(3+)-hydroxamate complex-[hydroxamate-binding protein]Side 1 = ADP + phosphate + Fe(3+)-hydroxamate complexSide 2 + [hydroxamate-binding protein]Side 1.. Functionally, part of the ABC transporter complex FhuBGCD involved in iron(3+)-hydroxamate import. Responsible for energy coupling to the transport system. This chain is Iron(3+)-hydroxamate import ATP-binding protein FhuC (fhuC), found in Bacillus subtilis (strain 168).